The primary structure comprises 502 residues: uncharacterized protein (502 aa).

Low complexity-rich tracts occupy residues 1–10 (MQSTTNNNTN), 28–47 (SNRS…NNLS), and 155–171 (NTED…SVNS). Disordered regions lie at residues 1–57 (MQST…VISY), 155–181 (NTED…LSAR), 212–362 (SLGN…TDKF), and 438–487 (TIDQ…TSNL). A compositionally biased stretch (polar residues) spans 212–230 (SLGNSERNSPDRPSTQGDS). 2 stretches are compositionally biased toward low complexity: residues 242 to 290 (RNAS…SSRN) and 309 to 327 (SNKN…TSIK). Residues 339–348 (QTNKSKNQRG) are compositionally biased toward polar residues. The span at 446-460 (TSDKNNSTKSNTKYN) shows a compositional bias: low complexity. The segment covering 470 to 487 (SYGTSKRSHNRSSNTSNL) has biased composition (polar residues).

The protein resides in the virion. This is an uncharacterized protein from Acanthamoeba polyphaga (Amoeba).